A 92-amino-acid chain; its full sequence is UPF0250 protein Rmag_0541 (92 aa).

This sequence belongs to the UPF0250 family.

The polypeptide is UPF0250 protein Rmag_0541 (Ruthia magnifica subsp. Calyptogena magnifica).